A 255-amino-acid chain; its full sequence is tRNA pseudouridine synthase A (255 aa).

Residue Asp-56 is the Nucleophile of the active site. Tyr-114 contacts substrate.

This sequence belongs to the tRNA pseudouridine synthase TruA family. As to quaternary structure, homodimer.

It catalyses the reaction uridine(38/39/40) in tRNA = pseudouridine(38/39/40) in tRNA. Its function is as follows. Formation of pseudouridine at positions 38, 39 and 40 in the anticodon stem and loop of transfer RNAs. This is tRNA pseudouridine synthase A from Methylacidiphilum infernorum (isolate V4) (Methylokorus infernorum (strain V4)).